The following is a 1170-amino-acid chain: RNA-binding protein 33 (1170 aa).

Disordered regions lie at residues 1-152 and 199-221; these read MAAA…EGHE and KDIK…LRFK. At alanine 2 the chain carries N-acetylalanine. Positions 20–36 are enriched in basic and acidic residues; sequence QFDKPGAERSWRRRAAD. Positions 37-49 are enriched in acidic residues; sequence EDWDSELEDDLLG. At serine 41 the chain carries Phosphoserine. The segment covering 82-108 has biased composition (polar residues); it reads FSSQGVTISLNATSGMVTSFELSDNTN. Composition is skewed to acidic residues over residues 112-126 and 203-214; these read GEQE…GEDE and EESDEEEEDDEE. Residues serine 205 and serine 233 each carry the phosphoserine modification. 4 disordered regions span residues 259–708, 721–784, 833–863, and 942–1050; these read FEER…NSNL, MSSS…PDED, QLYA…PFPG, and AVPQ…VPPG. Residues 267–278 show a composition bias toward basic residues; the sequence is KQGRYSSRRGGR. Residues 289–306 are compositionally biased toward basic and acidic residues; that stretch reads GDQRRESTERGRMKDHRP. Residues 311 to 329 are compositionally biased toward pro residues; sequence TQPPVVPQAPPPPPPPPQQ. 3 stretches are compositionally biased toward low complexity: residues 335-348, 357-372, and 394-403; these read LFQP…LPVQ, QGMH…RMMM, and TVVTPVQVPL. Pro residues predominate over residues 419 to 433; sequence FPGPPEFPQHTPGPV. At arginine 470 the chain carries Asymmetric dimethylarginine. Pro residues-rich tracts occupy residues 481-490, 554-568, and 582-630; these read SPPPPPPPPT, FIPP…PGQP, and LHPP…PQHP. Residues 632–642 show a composition bias toward basic residues; it reads QHQHHHHHHHL. Composition is skewed to polar residues over residues 662–708 and 721–732; these read QTAQ…NSNL and MSSSRCSATPSA. Serine 741 and serine 765 each carry phosphoserine. Residues 789 to 835 are a coiled coil; that stretch reads LYRLKIEEQKRLREEILKQKELRRQQQAGARKKELLERLAQQQQQLY. Serine 951 carries the phosphoserine modification. Residue lysine 960 forms a Glycyl lysine isopeptide (Lys-Gly) (interchain with G-Cter in SUMO2) linkage. Residues serine 973 and serine 991 each carry the phosphoserine modification. At arginine 1028 the chain carries Asymmetric dimethylarginine; alternate. Arginine 1028 bears the Omega-N-methylarginine; alternate mark. Residues 1098-1170 enclose the RRM domain; the sequence is CVVSVEGLSS…SHINVALIVE (73 aa).

As to quaternary structure, associates with the NXF1-NXT1 RNA export complex. Interacts with ALKBH5; facilitating ALKBH5 recruitment to m6A-containing transcripts. Interacts with SENP1; promoting ALKBH5 deSUMOylation and subsequent activation.

It is found in the nucleus. Its subcellular location is the cytoplasm. In terms of biological role, RNA reader protein, which recognizes and binds specific RNAs, thereby regulating RNA metabolic processes, such as mRNA export, mRNA stability and/or translation. Binds a subset of intronless RNAs containing GC-rich elements, such as NORAD, and promotes their nuclear export by recruiting target RNAs to components of the NXF1-NXT1 RNA export machinery. Specifically recognizes and binds N6-methyladenosine (m6A)-containing mRNAs, promoting their demethylation by ALKBH5. Acts as an molecular adapter, which (1) promotes ALKBH5 recruitment to m6A-containing transcripts and (2) activates ALKBH5 demethylase activity by recruiting SENP1, leading to ALKBH5 deSUMOylation and subsequent activation. This is RNA-binding protein 33 from Homo sapiens (Human).